Here is a 657-residue protein sequence, read N- to C-terminus: Endoplasmic reticulum chaperone BiP homolog (657 aa).

A signal peptide spans 1-17 (MKVFSLILIAFVANAYC). ATP contacts are provided by residues 38–41 (GTTY), Lys99, 229–231 (GGT), 295–302 (EKAKRALS), and 366–369 (GSTR). Residues 128–282 (KPNVEVKVGS…KKKSGKDLRK (155 aa)) are nucleotide-binding (NBD). A substrate-binding (SBD) region spans residues 402–502 (VQAGVIGGVE…PRGVPQIEVT (101 aa)). The segment at 607 to 657 (LGSNQDASTEENKEQKKELESVVQPIVSKLYSAGGQGEQASEEPSEDHDEL) is disordered. A compositionally biased stretch (basic and acidic residues) spans 616–626 (EENKEQKKELE). Acidic residues predominate over residues 646 to 657 (ASEEPSEDHDEL). Positions 654-657 (HDEL) match the Prevents secretion from ER motif.

It belongs to the heat shock protein 70 family.

The protein localises to the endoplasmic reticulum lumen. It carries out the reaction ATP + H2O = ADP + phosphate + H(+). The chaperone activity is regulated by ATP-induced allosteric coupling of the nucleotide-binding (NBD) and substrate-binding (SBD) domains. In the ADP-bound and nucleotide-free (apo) states, the two domains have little interaction. In contrast, in the ATP-bound state the two domains are tightly coupled, which results in drastically accelerated kinetics in both binding and release of polypeptide substrates. J domain-containing co-chaperones stimulate the ATPase activity and are required for efficient substrate recognition. Its function is as follows. Endoplasmic reticulum chaperone that plays a key role in protein folding and quality control in the endoplasmic reticulum lumen. Required for ER dynamics during the first embryonic cell divisions. Specifically, controls ER transition into sheet-like structures at the onset of mitosis, possibly by regulating homotypic membrane fusion. The polypeptide is Endoplasmic reticulum chaperone BiP homolog (hsp-4) (Caenorhabditis elegans).